The primary structure comprises 400 residues: Bifunctional enzyme IspD/IspF (400 aa).

Residues 1–240 form a 2-C-methyl-D-erythritol 4-phosphate cytidylyltransferase region; that stretch reads MQESTMKFGI…EKLSHALPDV (240 aa). A 2-C-methyl-D-erythritol 2,4-cyclodiphosphate synthase region spans residues 241–400; the sequence is RTGNGYDVHQ…ATVVYQGRPL (160 aa). Residues aspartate 247 and histidine 249 each contribute to the a divalent metal cation site. Residues 247-249 and 273-274 contribute to the 4-CDP-2-C-methyl-D-erythritol 2-phosphate site; these read DVH and HS. An a divalent metal cation-binding site is contributed by histidine 281. Residues 295-297, 371-374, phenylalanine 378, and arginine 381 contribute to the 4-CDP-2-C-methyl-D-erythritol 2-phosphate site; these read DIG and TTNE.

The protein in the N-terminal section; belongs to the IspD/TarI cytidylyltransferase family. IspD subfamily. This sequence in the C-terminal section; belongs to the IspF family. A divalent metal cation serves as cofactor.

It catalyses the reaction 2-C-methyl-D-erythritol 4-phosphate + CTP + H(+) = 4-CDP-2-C-methyl-D-erythritol + diphosphate. The enzyme catalyses 4-CDP-2-C-methyl-D-erythritol 2-phosphate = 2-C-methyl-D-erythritol 2,4-cyclic diphosphate + CMP. The protein operates within isoprenoid biosynthesis; isopentenyl diphosphate biosynthesis via DXP pathway; isopentenyl diphosphate from 1-deoxy-D-xylulose 5-phosphate: step 2/6. Its pathway is isoprenoid biosynthesis; isopentenyl diphosphate biosynthesis via DXP pathway; isopentenyl diphosphate from 1-deoxy-D-xylulose 5-phosphate: step 4/6. Bifunctional enzyme that catalyzes the formation of 4-diphosphocytidyl-2-C-methyl-D-erythritol from CTP and 2-C-methyl-D-erythritol 4-phosphate (MEP) (IspD), and catalyzes the conversion of 4-diphosphocytidyl-2-C-methyl-D-erythritol 2-phosphate (CDP-ME2P) to 2-C-methyl-D-erythritol 2,4-cyclodiphosphate (ME-CPP) with a corresponding release of cytidine 5-monophosphate (CMP) (IspF). In Agrobacterium fabrum (strain C58 / ATCC 33970) (Agrobacterium tumefaciens (strain C58)), this protein is Bifunctional enzyme IspD/IspF.